Reading from the N-terminus, the 347-residue chain is NADH-ubiquinone oxidoreductase chain 2 (347 aa).

A run of 11 helical transmembrane segments spans residues 3 to 23 (PPIL…VLTS), 25 to 45 (HWLL…PILM), 60 to 80 (FLTQ…NLMF), 96 to 116 (GLVT…FWVP), 122 to 142 (ISLS…LSVL), 153 to 173 (LLIT…LNQT), 178 to 198 (ILAY…TYNP), 200 to 220 (LMVL…MLFM), 237 to 257 (LPLM…LPPL), 274 to 294 (DMII…YFYM), and 323 to 343 (IILL…TPMM).

This sequence belongs to the complex I subunit 2 family. In terms of assembly, core subunit of respiratory chain NADH dehydrogenase (Complex I) which is composed of 45 different subunits. Interacts with TMEM242.

The protein resides in the mitochondrion inner membrane. The catalysed reaction is a ubiquinone + NADH + 5 H(+)(in) = a ubiquinol + NAD(+) + 4 H(+)(out). Its function is as follows. Core subunit of the mitochondrial membrane respiratory chain NADH dehydrogenase (Complex I) which catalyzes electron transfer from NADH through the respiratory chain, using ubiquinone as an electron acceptor. Essential for the catalytic activity and assembly of complex I. The sequence is that of NADH-ubiquinone oxidoreductase chain 2 from Phoca vitulina (Harbor seal).